We begin with the raw amino-acid sequence, 869 residues long: Mismatch repair endonuclease PMS2 (869 aa).

5 residues coordinate ATP: Asn-44, Asp-69, Glu-108, Ala-109, and Leu-110. The short motif at 585 to 588 is the Nuclear localization signal element; the sequence is RRFK.

It belongs to the DNA mismatch repair MutL/HexB family.

It is found in the nucleus. The catalysed reaction is ATP + H2O = ADP + phosphate + H(+). Its function is as follows. Component of the post-replicative DNA mismatch repair system (MMR). Involved in B cell growth by positively regulating B cell proliferation and controlling replication efficiency. Controls cell cycle to prevent re-replication and defects in DNA damage-induced G2 checkpoint. Doesn't seem to counteract or control the immunoglobulin gene conversion (Ig GC) and to contribute to guanine/uracil mismatch repair. Possesses an ATPase activity, but in the absence of gross structural changes, ATP hydrolysis may not be necessary for proficient mismatch repair. The chain is Mismatch repair endonuclease PMS2 from Gallus gallus (Chicken).